The chain runs to 129 residues: Glycine cleavage system H protein (129 aa).

One can recognise a Lipoyl-binding domain in the interval 24-106; sequence EAVVGITEHA…YGAGWLFRIK (83 aa). An N6-lipoyllysine modification is found at Lys65.

The protein belongs to the GcvH family. The glycine cleavage system is composed of four proteins: P, T, L and H. (R)-lipoate serves as cofactor.

In terms of biological role, the glycine cleavage system catalyzes the degradation of glycine. The H protein shuttles the methylamine group of glycine from the P protein to the T protein. This Aeromonas hydrophila subsp. hydrophila (strain ATCC 7966 / DSM 30187 / BCRC 13018 / CCUG 14551 / JCM 1027 / KCTC 2358 / NCIMB 9240 / NCTC 8049) protein is Glycine cleavage system H protein.